The primary structure comprises 1111 residues: Cell death abnormality protein 1 (1111 aa).

The first 18 residues, 1-18 (MRLILLVLLATWQVVVDT), serve as a signal peptide directing secretion. Topologically, residues 19–910 (RAPTFPDKLT…NGAGRSTGLT (892 aa)) are extracellular. The 73-residue stretch at 41–113 (GDHVCTVKTI…QCCDGYYQTK (73 aa)) folds into the EMI domain. Intrachain disulfides connect C45–C106, C71–C80, C105–C117, C121–C130, C125–C136, C138–C147, C160–C172, C166–C179, C181–C190, C203–C215, C209–C221, C223–C232, C245–C257, C251–C264, and C266–C275. A glycan (N-linked (GlcNAc...) asparagine) is linked at N66. 4 EGF-like domains span residues 118–148 (LPDCNPPCKKGKCIEPGKCECDPGYGGKYCA), 156–191 (WGLGCSKSCDCENGANCDPELGTCICTSGFQGERCE), 199–233 (WGPNCVKSCPCQNGGKCNKEGKCVCSDGWGGEFCL), and 241–276 (FGAECKFECNCQNGATCDNTNGKCICKSGYHGALCE). Residues N333 and N345 are each glycosylated (N-linked (GlcNAc...) asparagine). The 38-residue stretch at 421-458 (YGPNCEKQAMCDWNHASECNPETGSCVCKPGRTGKNCS) folds into the EGF-like 5 domain. 3 disulfides stabilise this stretch: C425/C439, C431/C446, and C448/C457. N456 carries an N-linked (GlcNAc...) asparagine glycan. An FU repeat occupies 629–680 (DQKCDPNTFGFLCQETVTPSPCASTDPKNGVCLSCPPGSSGIHCEHNCPAGS). The 36-residue stretch at 681–716 (YGDGCQQVCSCADGHGCDPTTGECICEPGYHGKTCS) folds into the EGF-like 6 domain. 3 disulfide bridges follow: C685–C697, C691–C704, and C706–C715. Residues 911–931 (WFFVLLIVALCGGLGLIALFY) traverse the membrane as a helical segment. Residues 931–1007 (YRNKYQKEKD…EEELENKKIH (77 aa)) are interaction with trim-21. The Cytoplasmic segment spans residues 932–1111 (RNKYQKEKDP…KKRAQDNLYT (180 aa)). 2 disordered regions span residues 940–993 (DPDM…PNGL) and 1006–1111 (IHGR…NLYT). The NPXY motif lies at 962–965 (NPLY). Positions 963-980 (PLYSRQSVFPDSDAFSSE) are enriched in polar residues. Y1019 is subject to Phosphotyrosine; by SRC. The short motif at 1019-1022 (YASL) is the YXXL element. Residues 1030 to 1039 (SSSSASASAS) show a composition bias toward low complexity. The segment covering 1068-1083 (NSISPAHAVTTSNHNE) has biased composition (polar residues).

In terms of assembly, interacts (via C-terminus) with ced-6 (via PTB domain). Interacts with nck-1; the interaction is required for ced-1 degradation through the proteasome pathway. Interacts with V-ATPase vha-10. Post-translationally, phosphorylation of Tyr-1019, within the YXXL motif, by src-1 is thought to initiate phagosomal formation. 'Lys-48'-linked polyubiquitination by trim-21 leads to proteasomal degradation. As to expression, expressed in engulfing cells and syncytium hypodermal cells. Ced-7 is necessary for clustering around cell corpses prior to engulfment.

It is found in the cell membrane. It localises to the cytoplasmic vesicle. Its subcellular location is the phagosome membrane. Its function is as follows. Involved in programmed cell death, also called apoptosis, in both somatic and germ cells. Acts by recruiting ced-6 to phagosomes which enables actin-dependent cytoskeletal reorganization and subsequent engulfment of the apoptotic cell corpse. Has a role in the association of ppk-3 and rab-7 with the phagosomal surface which is necessary for the incorporation of lysosomes to phagosomes during phagosome maturation. Activates the expression of unfolded protein response genes, which are involved in the immune response to live bacteria. This chain is Cell death abnormality protein 1, found in Caenorhabditis elegans.